The primary structure comprises 332 residues: Succinylglutamate desuccinylase (332 aa).

Positions 59, 62, and 151 each coordinate Zn(2+). Glu215 is a catalytic residue.

Belongs to the AspA/AstE family. Succinylglutamate desuccinylase subfamily. It depends on Zn(2+) as a cofactor.

The enzyme catalyses N-succinyl-L-glutamate + H2O = L-glutamate + succinate. It participates in amino-acid degradation; L-arginine degradation via AST pathway; L-glutamate and succinate from L-arginine: step 5/5. Transforms N(2)-succinylglutamate into succinate and glutamate. In Pseudomonas paraeruginosa (strain DSM 24068 / PA7) (Pseudomonas aeruginosa (strain PA7)), this protein is Succinylglutamate desuccinylase.